We begin with the raw amino-acid sequence, 85 residues long: uncharacterized protein (85 aa).

Ser22 is modified (phosphoserine).

Its subcellular location is the cytoplasm. The protein resides in the nucleus. This is an uncharacterized protein from Saccharomyces cerevisiae (strain ATCC 204508 / S288c) (Baker's yeast).